The primary structure comprises 64 residues: Putative H/ACA ribonucleoprotein complex subunit 3 (64 aa).

The protein belongs to the NOP10 family. In terms of assembly, component of the small nucleolar ribonucleoprotein particles containing H/ACA-type snoRNAs (H/ACA snoRNPs).

It is found in the nucleus. The protein resides in the nucleolus. Functionally, required for ribosome biogenesis. Part of a complex which catalyzes pseudouridylation of rRNA. This involves the isomerization of uridine such that the ribose is subsequently attached to C5, instead of the normal N1. Pseudouridine ('psi') residues may serve to stabilize the conformation of rRNAs. In Caenorhabditis elegans, this protein is Putative H/ACA ribonucleoprotein complex subunit 3 (nola-3).